Consider the following 155-residue polypeptide: MSRRGTAEEKTTKSDPIYRNRLVNMLVNRILKHGKKSLAYQIIYRAVKKIQQKTETNPLSVLRQAMRGVTPDIAVKARRVGGSTHQVPLEIGSTQGKALAIRWLLGASRKRPGRNMAFKLSSELVDAAKGSGDAIRKKEETHRMAEANRAFAHFR.

This sequence belongs to the universal ribosomal protein uS7 family. In terms of assembly, part of the 30S ribosomal subunit.

It is found in the plastid. The protein localises to the chloroplast. One of the primary rRNA binding proteins, it binds directly to 16S rRNA where it nucleates assembly of the head domain of the 30S subunit. In Chloranthus spicatus (Chulantree), this protein is Small ribosomal subunit protein uS7cz/uS7cy (rps7-A).